A 356-amino-acid chain; its full sequence is Protein RecA (356 aa).

77-84 (GPESSGKT) provides a ligand contact to ATP.

Belongs to the RecA family.

Its subcellular location is the cytoplasm. Functionally, can catalyze the hydrolysis of ATP in the presence of single-stranded DNA, the ATP-dependent uptake of single-stranded DNA by duplex DNA, and the ATP-dependent hybridization of homologous single-stranded DNAs. It interacts with LexA causing its activation and leading to its autocatalytic cleavage. In Caulobacter sp. (strain K31), this protein is Protein RecA.